Consider the following 476-residue polypeptide: Calcium/calmodulin-dependent protein kinase type 1G (476 aa).

One can recognise a Protein kinase domain in the interval 23–277 (FIFMEVLGSG…CEKALRHPWI (255 aa)). Residues 29-37 (LGSGAFSEV) and K52 each bind ATP. D143 functions as the Proton acceptor in the catalytic mechanism. The interval 277–317 (IDGNTALHRDIYPSVSLQIQKNFAKSKWRQAFNAAAVVHHM) is autoinhibitory domain. The interval 297 to 318 (KNFAKSKWRQAFNAAAVVHHMR) is calmodulin-binding. A disordered region spans residues 326–387 (SPSVRQEVEN…SSRPSAPGGR (62 aa)).

It belongs to the protein kinase superfamily. CAMK Ser/Thr protein kinase family. CaMK subfamily. In terms of processing, prenylated on Cys-473.

The protein resides in the cytoplasm. It is found in the golgi apparatus membrane. It localises to the cell membrane. It carries out the reaction L-seryl-[protein] + ATP = O-phospho-L-seryl-[protein] + ADP + H(+). It catalyses the reaction L-threonyl-[protein] + ATP = O-phospho-L-threonyl-[protein] + ADP + H(+). Its activity is regulated as follows. Activated by Ca(2+)/calmodulin. Binding of calmodulin is thought to result in a conformational change and leads to activation through phosphorylation by CAMKK1. In terms of biological role, calcium/calmodulin-dependent protein kinase belonging to a proposed calcium-triggered signaling cascade. In vitro phosphorylates transcription factor CREB1. In Rattus norvegicus (Rat), this protein is Calcium/calmodulin-dependent protein kinase type 1G (Camk1g).